The primary structure comprises 141 residues: Protein MGF 100-2L (141 aa).

This sequence belongs to the asfivirus MGF 100 family.

Its function is as follows. Plays a role in virus cell tropism, and may be required for efficient virus replication in macrophages. The chain is Protein MGF 100-2L from African swine fever virus (isolate Tick/Malawi/Lil 20-1/1983) (ASFV).